The sequence spans 45 residues: Large ribosomal subunit protein bL34 (45 aa).

This sequence belongs to the bacterial ribosomal protein bL34 family.

This chain is Large ribosomal subunit protein bL34, found in Kineococcus radiotolerans (strain ATCC BAA-149 / DSM 14245 / SRS30216).